The sequence spans 1453 residues: Collagen alpha-1(I) chain (1453 aa).

The signal sequence occupies residues 1–22; the sequence is MFSFVDSRLLLLIAATVLLTRG. Residues 23-151 constitute a propeptide, N-terminal propeptide; it reads EGEEDIQTGS…PPGLGGNFAP (129 aa). Positions 31-89 constitute a VWFC domain; that stretch reads GSCVQDGLTYNDKDVWKPEPCQICVCDSGNILCDEVICEDTSDCPNAEIPFGECCPICP. The segment at 98-1203 is disordered; the sequence is PESAGVEGPK…PQEKAHDGGR (1106 aa). Residues 106 to 116 show a composition bias toward basic and acidic residues; the sequence is PKGDTGPRGDR. Residues 131-143 show a composition bias toward pro residues; sequence PGLPGPPGPPGPP. Gln152 is subject to Pyrrolidone carboxylic acid. Lys160 bears the Allysine mark. Over residues 162-176 the composition is skewed to low complexity; sequence AGVAVPGPMGPAGPR. 4-hydroxyproline occurs at positions 179, 182, 185, 194, 197, 200, 215, 230, 236, 245, and 251. Residues 187 to 206 show a composition bias toward low complexity; sequence PQGFQGPPGEPGEPGASGPM. Lys254 carries the 5-hydroxylysine; alternate modification. O-linked (Gal...) hydroxylysine; partial glycosylation occurs at Lys254. The span at 265–284 shows a compositional bias: low complexity; the sequence is AKGQPGPAGPKGEPGSPGEN. A 4-hydroxyproline mark is found at Pro269, Pro278, Pro281, Pro287, Pro296, Pro302, Pro317, Pro323, Pro332, and Pro335. Residues 307–319 show a composition bias toward low complexity; it reads PAGARGNDGAPGA. A compositionally biased stretch (pro residues) spans 320–334; that stretch reads AGPPGPTGPAGPPGF. Low complexity predominate over residues 350-361; that stretch reads RGSEGPQGSRGE. 4-hydroxyproline is present on residues Pro362, Pro365, Pro377, Pro383, Pro392, Pro398, Pro401, and Pro416. Residues 368–418 show a composition bias toward low complexity; it reads AGAAGPAGNPGADGQPGAKGATGAPGIAGAPGFPGARGPSGPQGPSGAPGP. 5-hydroxylysine is present on Lys419. A 4-hydroxyproline mark is found at Pro425, Pro428, Pro440, Pro449, Pro464, Pro470, Pro479, and Pro485. A compositionally biased stretch (low complexity) spans 463–482; it reads EPGPAGLPGPAGERGAPGSR. The residue at position 494 (Lys494) is a 5-hydroxylysine. Pro497, Pro503, Pro512, Pro518, Pro524, Pro533, Pro536, Pro545, Pro554, Pro560, Pro572, Pro581, Pro584, Pro590, Pro593, Pro611, Pro629, Pro635, Pro641, Pro647, Pro653, Pro659, Pro671, Pro680, Pro692, Pro704, Pro707, Pro713, Pro719, Pro728, and Pro737 each carry 4-hydroxyproline. The span at 527 to 581 shows a compositional bias: low complexity; that stretch reads KGLTGSPGSPGPDGKTGPPGPAGQDGRPGPAGPPGARGQAGVMGFPGPKGAAGEP. The segment covering 623 to 664 has biased composition (low complexity); the sequence is QGPAGAPGFQGLPGPAGPPGEAGKPGEQGVPGNAGAPGPAGA. Positions 685–722 are enriched in low complexity; sequence PRGANGAPGNDGAKGDAGAPGAPGNEGPPGLEGMPGER. A 5-hydroxylysine modification is found at Lys740. Pro746, Pro761, Pro767, Pro776, Pro788, Pro794, Pro797, Pro806, Pro812, Pro830, Pro839, and Pro848 each carry 4-hydroxyproline. The span at 800-827 shows a compositional bias: low complexity; it reads AGFAGPPGADGQPGAKGETGDAGAKGDA. Over residues 835–883 the composition is skewed to low complexity; the sequence is PTGAPGPAGZVGAPGPKGARGSAGPPGATGFPGAAGRVGPPGPSGNIGL. Lys851 carries the post-translational modification 5-hydroxylysine. Pro860 and Pro866 each carry 4-hydroxyproline. A 3-hydroxyproline modification is found at Pro874. 4-hydroxyproline occurs at positions 875, 884, 887, 908, 911, 917, 920, 926, 935, 953, 962, 965, 971, 986, 992, 998, 1007, and 1013. Residues 890–908 show a composition bias toward low complexity; that stretch reads AGKZGSKGPRGETGPAGRP. Over residues 910–920 the composition is skewed to pro residues; sequence EPGPAGPPGPP. Pro residues predominate over residues 985 to 995; it reads PPGPMGPPGLA. Positions 997 to 1021 are enriched in low complexity; sequence PPGEAGREGAPGAEGAPGRDGAAGP. Position 1022 is a 5-hydroxylysine; partial (Lys1022). Residues 1031-1046 show a composition bias toward pro residues; that stretch reads AGPPGAPGAPGAPGPV. 4 positions are modified to 4-hydroxyproline: Pro1034, Pro1037, Pro1040, and Pro1067. Over residues 1070-1081 the composition is skewed to low complexity; that stretch reads AGARGPAGPQGP. Residues 1082 to 1096 are compositionally biased toward basic and acidic residues; the sequence is RGDKGETGEQGDRGM. A 5-hydroxylysine; partial modification is found at Lys1085. Position 1097 is a 5-hydroxylysine; alternate (Lys1097). Residue Lys1097 is glycosylated (O-linked (Gal...) hydroxylysine; partial). Pro1109, Pro1112, Pro1115, Pro1133, and Pro1148 each carry 4-hydroxyproline. A compositionally biased stretch (low complexity) spans 1115–1139; the sequence is PGEQGPSGASGPAGPRGPPGSAGAA. Position 1153 is a 3-hydroxyproline (Pro1153). The residue at position 1154 (Pro1154) is a 4-hydroxyproline. A compositionally biased stretch (pro residues) spans 1166–1181; it reads VGPPGPPGPPGPPGPP. 3-hydroxyproline is present on Pro1168. Position 1169 is a 4-hydroxyproline (Pro1169). Position 1171 is a 3-hydroxyproline (Pro1171). Residue Pro1172 is modified to 4-hydroxyproline. Pro1174 carries the 3-hydroxyproline modification. 4-hydroxyproline is present on residues Pro1175, Pro1178, and Pro1181. An Allysine modification is found at Lys1197. The propeptide at 1208–1453 is C-terminal propeptide; that stretch reads DDANVMRDRD…GIDIGPVCFL (246 aa). In terms of domain architecture, Fibrillar collagen NC1 spans 1218–1453; the sequence is LEVDTTLKSL…GIDIGPVCFL (236 aa). 3 disulfides stabilise this stretch: Cys1248–Cys1280, Cys1288–Cys1451, and Cys1359–Cys1404. The Ca(2+) site is built by Asp1266, Asn1268, Gln1269, Cys1271, and Asp1274. Asn1354 carries N-linked (GlcNAc...) asparagine glycosylation.

The protein belongs to the fibrillar collagen family. In terms of assembly, trimers of one alpha 2(I) and two alpha 1(I) chains. Post-translationally, contains mostly 4-hydroxyproline. Proline residues at the third position of the tripeptide repeating unit (G-X-Y) are 4-hydroxylated in some or all of the chains. In terms of processing, contains 3-hydroxyproline. This modification occurs on the first proline residue in the sequence motif Gly-Pro-Hyp, where Hyp is 4-hydroxyproline. Lysine residues at the third position of the tripeptide repeating unit (G-X-Y) are 5-hydroxylated in some or all of the chains. Post-translationally, O-glycosylated on hydroxylated lysine residues. The O-linked glycan consists of a Glc-Gal disaccharide. As to expression, forms the fibrils of tendon, ligaments and bones. In bones the fibrils are mineralized with calcium hydroxyapatite.

It is found in the secreted. It localises to the extracellular space. The protein localises to the extracellular matrix. In terms of biological role, type I collagen is a member of group I collagen (fibrillar forming collagen). The chain is Collagen alpha-1(I) chain (COL1A1) from Gallus gallus (Chicken).